The primary structure comprises 194 residues: MEEKLKKSKIIFVVGGPGSGKGTQCEKIVQKYGYTHLSTGDLLRAEVSSGSARGKMLSEIMEKGQLVPLETVLDMLRDAMVAKVDTSKGFLIDGYPREVKQGEEFERKIGQPTLLLYVDAGPETMTKRLLKRGETSGRVDDNEETIKKRLETYYKATEPVIAFYEKRGIVRKVNAEGSVDDVFSQVCTHLDTLK.

Position 1 is an N-acetylmethionine (Met-1). Position 18-23 (18-23 (GSGKGT)) interacts with ATP. The residue at position 38 (Ser-38) is a Phosphoserine. The tract at residues 38–67 (STGDLLRAEVSSGSARGKMLSEIMEKGQLV) is NMP. Residues Thr-39, Arg-44, 65 to 67 (QLV), 94 to 97 (GYPR), and Gln-101 each bind AMP. Residues 131-141 (KRGETSGRVDD) are LID. Arg-132 provides a ligand contact to ATP. AMP is bound by residues Arg-138 and Arg-149. Residue Gly-177 participates in ATP binding.

This sequence belongs to the adenylate kinase family. AK1 subfamily. In terms of assembly, monomer. Requires Mg(2+) as cofactor.

It is found in the cytoplasm. The enzyme catalyses a ribonucleoside 5'-phosphate + ATP = a ribonucleoside 5'-diphosphate + ADP. It carries out the reaction AMP + ATP = 2 ADP. The catalysed reaction is dAMP + ATP = dADP + ADP. It catalyses the reaction dATP + AMP = dADP + ADP. The enzyme catalyses dAMP + dATP = 2 dADP. It carries out the reaction a 2'-deoxyribonucleoside 5'-diphosphate + ATP = a 2'-deoxyribonucleoside 5'-triphosphate + ADP. The catalysed reaction is a ribonucleoside 5'-diphosphate + ATP = a ribonucleoside 5'-triphosphate + ADP. It catalyses the reaction CDP + GTP = CTP + GDP. The enzyme catalyses GDP + ATP = GTP + ADP. It carries out the reaction UDP + ATP = UTP + ADP. The catalysed reaction is GTP + UDP = UTP + GDP. It catalyses the reaction dTDP + GTP = dTTP + GDP. The enzyme catalyses dCDP + GTP = dCTP + GDP. It carries out the reaction dGDP + ATP = dGTP + ADP. The catalysed reaction is dADP + GTP = dATP + GDP. It catalyses the reaction thiamine diphosphate + ADP = thiamine triphosphate + AMP. Catalyzes the reversible transfer of the terminal phosphate group between ATP and AMP. Also displays broad nucleoside diphosphate kinase activity. Plays an important role in cellular energy homeostasis and in adenine nucleotide metabolism. Also catalyzes at a very low rate the synthesis of thiamine triphosphate (ThTP) from thiamine diphosphate (ThDP) and ADP. In Sus scrofa (Pig), this protein is Adenylate kinase isoenzyme 1.